Here is a 1169-residue protein sequence, read N- to C-terminus: ATP-dependent helicase/deoxyribonuclease subunit B (1169 aa).

The region spanning 1-285 is the UvrD-like helicase ATP-binding domain; the sequence is MEIQFLAGRS…TIFERNHRHL (285 aa). 8 to 15 is an ATP binding site; sequence GRSGSGKT. The UvrD-like helicase C-terminal domain maps to 280-586; sequence RNHRHLYTPD…KFALIPPSLD (307 aa). Positions 801, 1121, 1124, and 1130 each coordinate [4Fe-4S] cluster.

The protein belongs to the helicase family. AddB/RexB type 1 subfamily. As to quaternary structure, heterodimer of AddA and AddB. The cofactor is Mg(2+). [4Fe-4S] cluster is required as a cofactor.

Functionally, the heterodimer acts as both an ATP-dependent DNA helicase and an ATP-dependent, dual-direction single-stranded exonuclease. Recognizes the chi site generating a DNA molecule suitable for the initiation of homologous recombination. The AddB subunit has 5' -&gt; 3' nuclease activity but not helicase activity. The protein is ATP-dependent helicase/deoxyribonuclease subunit B of Bacillus pumilus (strain SAFR-032).